The following is a 145-amino-acid chain: Large ribosomal subunit protein uL16 (145 aa).

The segment covering 1–17 (MLMPKRVKHRKVQRGRM) has biased composition (basic residues). The tract at residues 1–20 (MLMPKRVKHRKVQRGRMKGV) is disordered.

This sequence belongs to the universal ribosomal protein uL16 family. As to quaternary structure, part of the 50S ribosomal subunit.

Its function is as follows. Binds 23S rRNA and is also seen to make contacts with the A and possibly P site tRNAs. The polypeptide is Large ribosomal subunit protein uL16 (Acetivibrio thermocellus (strain ATCC 27405 / DSM 1237 / JCM 9322 / NBRC 103400 / NCIMB 10682 / NRRL B-4536 / VPI 7372) (Clostridium thermocellum)).